Consider the following 677-residue polypeptide: UvrABC system protein B (677 aa).

The region spanning 24-412 (EGVLEGVPAQ…EGIVVEQVIR (389 aa)) is the Helicase ATP-binding domain. 37 to 44 (GVTGSGKT) contributes to the ATP binding site. The Beta-hairpin signature appears at 90–113 (YYDYYQPEAYLPSSDTYIEKDLAI). The region spanning 429 to 591 (QIDDLMEEIQ…ITPQQIKKAR (163 aa)) is the Helicase C-terminal domain. The UVR domain maps to 635-670 (EKSMERTRKLMQEAAKKLEFIEAAQYRDELLKMEDL).

The protein belongs to the UvrB family. In terms of assembly, forms a heterotetramer with UvrA during the search for lesions. Interacts with UvrC in an incision complex.

It is found in the cytoplasm. Functionally, the UvrABC repair system catalyzes the recognition and processing of DNA lesions. A damage recognition complex composed of 2 UvrA and 2 UvrB subunits scans DNA for abnormalities. Upon binding of the UvrA(2)B(2) complex to a putative damaged site, the DNA wraps around one UvrB monomer. DNA wrap is dependent on ATP binding by UvrB and probably causes local melting of the DNA helix, facilitating insertion of UvrB beta-hairpin between the DNA strands. Then UvrB probes one DNA strand for the presence of a lesion. If a lesion is found the UvrA subunits dissociate and the UvrB-DNA preincision complex is formed. This complex is subsequently bound by UvrC and the second UvrB is released. If no lesion is found, the DNA wraps around the other UvrB subunit that will check the other stand for damage. In Bacteroides fragilis (strain YCH46), this protein is UvrABC system protein B.